Consider the following 192-residue polypeptide: MKELFLIIGAPGSGKTTDASLIAQADATNITHYSTGDLLRAEVASGSELGKTIDSFISKGNLVPLDVVINTIVCALKAAPTKTIIIDGYPRSVEQMMEFDKVLSEQNEICLKGVIEVRVSEEVAKERVLGRNRGTDDNEEVFYNRMKVYTEPLNEILDFYQKKKLHFIIDGERAIEPIVADMKELIKKIQSI.

12 to 17 (GSGKTT) contacts ATP. The segment at 34 to 63 (STGDLLRAEVASGSELGKTIDSFISKGNLV) is NMP. Residues threonine 35, arginine 40, 61 to 63 (NLV), 88 to 91 (GYPR), and glutamine 95 each bind AMP. Residues 130–136 (GRNRGTD) form an LID region. Arginine 131 is an ATP binding site. AMP contacts are provided by arginine 133 and arginine 145. Arginine 173 is a binding site for ATP.

The protein belongs to the adenylate kinase family. In terms of assembly, monomer.

The protein resides in the cytoplasm. It catalyses the reaction AMP + ATP = 2 ADP. It functions in the pathway purine metabolism; AMP biosynthesis via salvage pathway; AMP from ADP: step 1/1. In terms of biological role, catalyzes the reversible transfer of the terminal phosphate group between ATP and AMP. Plays an important role in cellular energy homeostasis and in adenine nucleotide metabolism. The sequence is that of Adenylate kinase from Campylobacter jejuni (strain RM1221).